The primary structure comprises 422 residues: Testin (422 aa).

Residues 92–199 (MILTSPVAAK…GDVKLPKEVE (108 aa)) enclose the PET domain. The tract at residues 135–165 (QPVAGSEGAQYRKKQLAKQLPAHDQDPSKCH) is disordered. The span at 155 to 165 (PAHDQDPSKCH) shows a compositional bias: basic and acidic residues. 3 LIM zinc-binding domains span residues 234-299 (YYCF…SEKP), 300-359 (RCAG…NHAV), and 360-422 (SCQG…KMSS).

The protein belongs to the prickle / espinas / testin family. In terms of tissue distribution, expressed in the animal hemisphere at the 4-cell stage. By stage 18, expressed in cells adjacent to the anterior neural plate. In late neurula, expressed in the cranial neural crest. At tail bud stages, expressed strongly in the head, ventral to the developing eye, branchial arches and lateral line placodes. Also localized in the otic vesicle, dorsal fin and notochord with weaker expression at intersomitic junctions of tail bud embryos.

It localises to the cytoplasm. Its subcellular location is the cell cortex. The protein localises to the cell junction. It is found in the focal adhesion. Its function is as follows. Scaffold protein that may play a role in cell adhesion, cell spreading and in the reorganization of the actin cytoskeleton. May inhibit cell growth. Regulates cranial neural crest migration. Acts together with prickle1 to control axial elongation. The polypeptide is Testin (Xenopus laevis (African clawed frog)).